The chain runs to 201 residues: Small ribosomal subunit protein uS4c (201 aa).

Positions 15 to 44 (LGALPGLTNKRPRAGSDLRNQSRSGKKSQY) are disordered. The region spanning 89 to 150 (MRLDNILFRL…EQKSKVLIQN (62 aa)) is the S4 RNA-binding domain.

This sequence belongs to the universal ribosomal protein uS4 family. As to quaternary structure, part of the 30S ribosomal subunit. Contacts protein S5. The interaction surface between S4 and S5 is involved in control of translational fidelity.

Its subcellular location is the plastid. It localises to the chloroplast. Its function is as follows. One of the primary rRNA binding proteins, it binds directly to 16S rRNA where it nucleates assembly of the body of the 30S subunit. Functionally, with S5 and S12 plays an important role in translational accuracy. This chain is Small ribosomal subunit protein uS4c (rps4), found in Lactuca sativa (Garden lettuce).